We begin with the raw amino-acid sequence, 297 residues long: NAD kinase (297 aa).

The active-site Proton acceptor is Asp-74. NAD(+)-binding positions include 74 to 75 (DG), Arg-79, 148 to 149 (NE), Arg-176, Asp-178, 189 to 194 (TAYALS), and Gln-248.

The protein belongs to the NAD kinase family. A divalent metal cation serves as cofactor.

The protein resides in the cytoplasm. The catalysed reaction is NAD(+) + ATP = ADP + NADP(+) + H(+). Its function is as follows. Involved in the regulation of the intracellular balance of NAD and NADP, and is a key enzyme in the biosynthesis of NADP. Catalyzes specifically the phosphorylation on 2'-hydroxyl of the adenosine moiety of NAD to yield NADP. The polypeptide is NAD kinase (Blochmanniella pennsylvanica (strain BPEN)).